We begin with the raw amino-acid sequence, 269 residues long: Phosphate import ATP-binding protein PstB (269 aa).

Positions 21 to 264 (IEIKDFNFFY…PKDRRTENYI (244 aa)) constitute an ABC transporter domain. 55–62 (GPSGCGKT) lines the ATP pocket.

The protein belongs to the ABC transporter superfamily. Phosphate importer (TC 3.A.1.7) family. The complex is composed of two ATP-binding proteins (PstB), two transmembrane proteins (PstC and PstA) and a solute-binding protein (PstS).

It is found in the cell membrane. It catalyses the reaction phosphate(out) + ATP + H2O = ADP + 2 phosphate(in) + H(+). Part of the ABC transporter complex PstSACB involved in phosphate import. Responsible for energy coupling to the transport system. The sequence is that of Phosphate import ATP-binding protein PstB from Mycoplasma capricolum subsp. capricolum (strain California kid / ATCC 27343 / NCTC 10154).